Reading from the N-terminus, the 132-residue chain is Small ribosomal subunit protein uS8 (132 aa).

Belongs to the universal ribosomal protein uS8 family. As to quaternary structure, part of the 30S ribosomal subunit. Contacts proteins S5 and S12.

In terms of biological role, one of the primary rRNA binding proteins, it binds directly to 16S rRNA central domain where it helps coordinate assembly of the platform of the 30S subunit. In Bartonella henselae (strain ATCC 49882 / DSM 28221 / CCUG 30454 / Houston 1) (Rochalimaea henselae), this protein is Small ribosomal subunit protein uS8.